Here is a 103-residue protein sequence, read N- to C-terminus: Histone H4 (103 aa).

Positions 1-14 are enriched in gly residues; that stretch reads MSGRGKGGKGLGKG. The tract at residues 1 to 20 is disordered; the sequence is MSGRGKGGKGLGKGGAKRHR. Serine 2 bears the N-acetylserine mark. An N6-acetyllysine modification is found at lysine 17. The DNA-binding element occupies 17 to 21; it reads KRHRK. At lysine 21 the chain carries N6-methyllysine.

The protein belongs to the histone H4 family. As to quaternary structure, the nucleosome is a histone octamer containing two molecules each of H2A, H2B, H3 and H4 assembled in one H3-H4 heterotetramer and two H2A-H2B heterodimers. The octamer wraps approximately 147 bp of DNA.

The protein resides in the nucleus. Its subcellular location is the chromosome. Its function is as follows. Core component of nucleosome. Nucleosomes wrap and compact DNA into chromatin, limiting DNA accessibility to the cellular machineries which require DNA as a template. Histones thereby play a central role in transcription regulation, DNA repair, DNA replication and chromosomal stability. DNA accessibility is regulated via a complex set of post-translational modifications of histones, also called histone code, and nucleosome remodeling. This chain is Histone H4, found in Eucalyptus globulus (Tasmanian blue gum).